The following is a 333-amino-acid chain: Ferrochelatase (333 aa).

Positions 202 and 284 each coordinate Fe cation.

It belongs to the ferrochelatase family.

It localises to the cytoplasm. The enzyme catalyses heme b + 2 H(+) = protoporphyrin IX + Fe(2+). It functions in the pathway porphyrin-containing compound metabolism; protoheme biosynthesis; protoheme from protoporphyrin-IX: step 1/1. In terms of biological role, catalyzes the ferrous insertion into protoporphyrin IX. The chain is Ferrochelatase from Francisella tularensis subsp. holarctica (strain LVS).